A 466-amino-acid polypeptide reads, in one-letter code: Trigger factor (466 aa).

In terms of domain architecture, PPIase FKBP-type spans 166–245 (GDFAQIDLVA…LNAVKERELP (80 aa)). Disordered stretches follow at residues 313–332 (LEQE…TESS) and 424–466 (LPDD…AADK). The span at 426 to 444 (DDGEAVDEDATPEDTDAPA) shows a compositional bias: acidic residues. Over residues 453–466 (PKKKAAAKKKAADK) the composition is skewed to basic residues.

This sequence belongs to the FKBP-type PPIase family. Tig subfamily.

It localises to the cytoplasm. It catalyses the reaction [protein]-peptidylproline (omega=180) = [protein]-peptidylproline (omega=0). Involved in protein export. Acts as a chaperone by maintaining the newly synthesized protein in an open conformation. Functions as a peptidyl-prolyl cis-trans isomerase. The polypeptide is Trigger factor (Leifsonia xyli subsp. xyli (strain CTCB07)).